A 471-amino-acid chain; its full sequence is G2/mitotic-specific cyclin-1 (471 aa).

The protein belongs to the cyclin family. Cyclin AB subfamily.

Its function is as follows. Essential for the control of the cell cycle at the G2/M (mitosis) transition. Interacts with the CDC2 protein kinase to form MPF. G2/M cyclins accumulate steadily during G2 and are abruptly destroyed at mitosis. The polypeptide is G2/mitotic-specific cyclin-1 (CLB1) (Saccharomyces cerevisiae (strain ATCC 204508 / S288c) (Baker's yeast)).